A 300-amino-acid polypeptide reads, in one-letter code: Fatty acid hydroxylase uhd1 (300 aa).

Residues 14–20, R39, 63–64, 83–85, Y156, K160, 183–186, and S199 each bind NADP(+); these read GANGFVG, DL, VAS, and PVYI. Residue K160 is the Proton donor of the active site.

Belongs to the NAD(P)-dependent epimerase/dehydratase family. Dihydroflavonol-4-reductase subfamily.

Its pathway is secondary metabolite biosynthesis. Its function is as follows. Fatty acid hydroxylase; part of the gene cluster that mediates the biosynthesis of the glycolipid biosurfactant ustilagic acid (UA). UA is a secreted cellobiose glycolipid that is toxic for many microorganisms and confers biocontrol activity to U.maydis. UA consists of 15,16-dihydroxypalmitic or 2,15,16-trihydroxypalmitic acid, which is O-glycosidically linked to cellobiose at its terminal hydroxyl group. In addition, the cellobiose moiety is acetylated and acylated with a short-chain hydroxy fatty acid. UA biosynthesis starts with omega-hydroxylation of palmitic acid catalyzed by the cytochrome P450 monooxygenase cyp1. Terminal hydroxylation of palmitic acid precedes subterminal hydroxylation catalyzed by the cytochrome P450 monooxygenase cyp2. Sequential glucosylation of the hydroxy fatty acid is probably catalyzed by the glycosyltransferase ugt1. The cellobiose lipid is further decorated by acetylation of the proximal glucose residue and by acylation with a short-chain beta-hydroxy fatty acid at the distal glucose residue. The acyltransferase uat1 may be a good candidate for catalyzing either acetylation or acylation of the cellobiose lipid. The fatty acid synthase fas2 may be involved in synthesis of the carbon backbone of the short-chain beta-hydroxy fatty acid esterified to the cellobiose disaccharide. The secreted UA consists of a mixture of both alpha-hydroxylated and non-hydroxylated glycolipids; therefore, alpha-hydroxylation of the long-chain fatty, catalyzed by the fatty acid hydroxylase ahd1, occurs late in UA biosynthesis and may be the last step before secretion. The polypeptide is Fatty acid hydroxylase uhd1 (Mycosarcoma maydis (Corn smut fungus)).